Consider the following 346-residue polypeptide: Elongation factor Ts (346 aa).

Residues 80 to 83 are involved in Mg(2+) ion dislocation from EF-Tu; that stretch reads TDFV.

It belongs to the EF-Ts family.

It is found in the cytoplasm. Functionally, associates with the EF-Tu.GDP complex and induces the exchange of GDP to GTP. It remains bound to the aminoacyl-tRNA.EF-Tu.GTP complex up to the GTP hydrolysis stage on the ribosome. This is Elongation factor Ts from Streptococcus uberis (strain ATCC BAA-854 / 0140J).